A 558-amino-acid chain; its full sequence is Formate--tetrahydrofolate ligase (558 aa).

67-74 provides a ligand contact to ATP; sequence TPAGEGKT.

It belongs to the formate--tetrahydrofolate ligase family.

The enzyme catalyses (6S)-5,6,7,8-tetrahydrofolate + formate + ATP = (6R)-10-formyltetrahydrofolate + ADP + phosphate. Its pathway is one-carbon metabolism; tetrahydrofolate interconversion. In Ruegeria pomeroyi (strain ATCC 700808 / DSM 15171 / DSS-3) (Silicibacter pomeroyi), this protein is Formate--tetrahydrofolate ligase.